We begin with the raw amino-acid sequence, 262 residues long: Tritrans,polycis-undecaprenyl-diphosphate synthase (GGDP specific) (262 aa).

The active site involves D40. A Mg(2+)-binding site is contributed by D40. Substrate contacts are provided by residues 41-44 (GNRR), W45, and 85-87 (SAE). The active-site Proton acceptor is N88. Residues R92, R211, and 217–219 (RIS) contribute to the substrate site. E230 provides a ligand contact to Mg(2+).

This sequence belongs to the UPP synthase family. As to quaternary structure, homodimer. Mg(2+) serves as cofactor.

The catalysed reaction is geranylgeranyl diphosphate + 7 isopentenyl diphosphate = tri-trans,hepta-cis-undecaprenyl diphosphate + 7 diphosphate. Generates tritrans,heptacis-undecaprenyl diphosphate from isopentenyl pyrophosphate (IPP) and geranylgeranyl diphosphate. It is probably the precursor of glycosyl carrier lipids. This is Tritrans,polycis-undecaprenyl-diphosphate synthase (GGDP specific) (uppS) from Sulfolobus acidocaldarius (strain ATCC 33909 / DSM 639 / JCM 8929 / NBRC 15157 / NCIMB 11770).